Reading from the N-terminus, the 111-residue chain is ASFDEAPPGNSKAGEKIFKTKCAQCHTVDKGAGHKQGPNLNGLFGRQSGTTAGYSYSAANKNKAVEWEEKTLYDYLLNPKKYIPGTKMVFPGLKKPQDRADLIAYLKEATA.

An N-acetylalanine modification is found at Ala1. 3 residues coordinate heme c: Cys22, Cys25, and His26. Residue Lys80 is modified to N6,N6,N6-trimethyllysine. Heme c is bound at residue Met88. Lys94 bears the N6,N6,N6-trimethyllysine mark.

The protein belongs to the cytochrome c family. In terms of processing, binds 1 heme c group covalently per subunit.

It localises to the mitochondrion intermembrane space. Functionally, electron carrier protein. The oxidized form of the cytochrome c heme group can accept an electron from the heme group of the cytochrome c1 subunit of cytochrome reductase. Cytochrome c then transfers this electron to the cytochrome oxidase complex, the final protein carrier in the mitochondrial electron-transport chain. The chain is Cytochrome c from Brassica napus (Rape).